The following is a 221-amino-acid chain: MGQKVNPKGLRVGIIKDWEGKWFADKRNYSNLLIEDVKIREYIKRKLYQAGISRIQIERAANRVKVSIHTAKPGIVIGRGGAEVEALRKELEKMTAKQVHVNIVEVKTPEVDAQLVAENIASQLEKRIAFRRAMKQTVQRSLRMGAKGIKIACSGRLAGAEIARTEWYSEGKVPLHTLRADIDYGFAEANTTYGKIGVKVWIYKGEVLPEAKKPAAGQGGE.

One can recognise a KH type-2 domain in the interval 39–107 (IREYIKRKLY…QVHVNIVEVK (69 aa)).

Belongs to the universal ribosomal protein uS3 family. In terms of assembly, part of the 30S ribosomal subunit. Forms a tight complex with proteins S10 and S14.

Binds the lower part of the 30S subunit head. Binds mRNA in the 70S ribosome, positioning it for translation. This Desulforamulus reducens (strain ATCC BAA-1160 / DSM 100696 / MI-1) (Desulfotomaculum reducens) protein is Small ribosomal subunit protein uS3.